The chain runs to 348 residues: Spermatogenesis-associated protein 32 (348 aa).

A compositionally biased stretch (basic and acidic residues) spans 27-36 (YHHHHHPLED). Residues 27–61 (YHHHHHPLEDNKDEDNEMGTELSSMKPPPKVDPDP) form a disordered region. Residues serine 149 and serine 152 each carry the phosphoserine modification. Residues 308 to 329 (APATSPELQEDKDDSVPGTKKG) are disordered. Threonine 330 carries the post-translational modification Phosphothreonine.

As to quaternary structure, interacts with syntaxin-1 and ACTB. In terms of tissue distribution, abundantly expressed in testes. Expressed in germ cells, but not in Sertoli or Leydig cells of the adult testis. Localized at the acrosomal region of the round and elongated spermatids at stages VIII-X.

In Rattus norvegicus (Rat), this protein is Spermatogenesis-associated protein 32 (Spata32).